We begin with the raw amino-acid sequence, 142 residues long: Cell wall-binding protein YqgA (142 aa).

The signal sequence occupies residues 1 to 28 (MKQGKFSVFLILLLMLTLVVAPKEKAEA).

As to quaternary structure, found in a complex with F(1)F(0) ATP synthase and SpoIIIJ and YqjG.

Its subcellular location is the secreted. It is found in the cell wall. The polypeptide is Cell wall-binding protein YqgA (yqgA) (Bacillus subtilis (strain 168)).